A 259-amino-acid chain; its full sequence is Deoxyribose-phosphate aldolase (259 aa).

The active-site Proton donor/acceptor is aspartate 102. Lysine 167 functions as the Schiff-base intermediate with acetaldehyde in the catalytic mechanism. Lysine 201 functions as the Proton donor/acceptor in the catalytic mechanism.

Belongs to the DeoC/FbaB aldolase family. DeoC type 2 subfamily.

Its subcellular location is the cytoplasm. It carries out the reaction 2-deoxy-D-ribose 5-phosphate = D-glyceraldehyde 3-phosphate + acetaldehyde. It functions in the pathway carbohydrate degradation; 2-deoxy-D-ribose 1-phosphate degradation; D-glyceraldehyde 3-phosphate and acetaldehyde from 2-deoxy-alpha-D-ribose 1-phosphate: step 2/2. Its function is as follows. Catalyzes a reversible aldol reaction between acetaldehyde and D-glyceraldehyde 3-phosphate to generate 2-deoxy-D-ribose 5-phosphate. The protein is Deoxyribose-phosphate aldolase of Proteus mirabilis (strain HI4320).